The primary structure comprises 150 residues: Flagellar assembly factor FliW (150 aa).

The protein belongs to the FliW family. In terms of assembly, interacts with translational regulator CsrA and flagellin(s).

Its subcellular location is the cytoplasm. Functionally, acts as an anti-CsrA protein, binds CsrA and prevents it from repressing translation of its target genes, one of which is flagellin. Binds to flagellin and participates in the assembly of the flagellum. The protein is Flagellar assembly factor FliW of Caldanaerobacter subterraneus subsp. tengcongensis (strain DSM 15242 / JCM 11007 / NBRC 100824 / MB4) (Thermoanaerobacter tengcongensis).